A 754-amino-acid polypeptide reads, in one-letter code: LON peptidase N-terminal domain and RING finger protein 2 (754 aa).

2 TPR repeats span residues 23-58 and 59-91; these read IAQRLEEGDEAFRAGDYEMAAELFRSMLAGLAQPDR and GLCLRLGDALARAGRLPEALGAFRGAARLGALR. The disordered stretch occupies residues 112-136; sequence PLSAENPGGEPEAPGEGGPAPEPRA. The segment covering 115–125 has biased composition (low complexity); that stretch reads AENPGGEPEAP. TPR repeat units follow at residues 197 to 230, 231 to 264, and 266 to 298; these read LRRLAGQARSLQRQQQPEAALLRCDQALELAPDD, NSLLLLRAELYLTMKNYEQALQDASAACQNEPLL, and KGHQVKAQALSGLGRSKEVLKEFLYCLALNPEC. The interval 398-439 is disordered; the sequence is GLKRQFPDDVEDAPDLNAPGKIPKKDLSLQRSPNSETEESQG. Over residues 426-439 the composition is skewed to polar residues; sequence LQRSPNSETEESQG. The TPR 6 repeat unit spans residues 447 to 483; that stretch reads FECALCMRLLFEPVTTPCGHTFCLKCLERCLDHAPHC. An RING-type zinc finger spans residues 449-487; that stretch reads CALCMRLLFEPVTTPCGHTFCLKCLERCLDHAPHCPLCK. The 210-residue stretch at 528-737 folds into the Lon N-terminal domain; that stretch reads MSELSNLTRD…AIRRILVIIT (210 aa).

The polypeptide is LON peptidase N-terminal domain and RING finger protein 2 (LONRF2) (Homo sapiens (Human)).